Consider the following 587-residue polypeptide: ATP-dependent zinc metalloprotease FtsH 2 (587 aa).

Residues 1–12 lie on the Cytoplasmic side of the membrane; the sequence is MSSDRTREVTKR. A helical transmembrane segment spans residues 13 to 33; the sequence is ILMVLFGLWLLQFFFLPPLTT. Residues 34-102 are Extracellular-facing; the sequence is RPTELSYSAF…EQRYEVTRTP (69 aa). Residues 103 to 123 form a helical membrane-spanning segment; that stretch reads WWVTLLPTVLWLAVMVGLFAW. Residues 124-587 are Cytoplasmic-facing; that stretch reads AQKRQAGAFG…GDDVRRILSA (464 aa). ATP is bound at residue 192–199; the sequence is GPPGTGKT. His-416 contacts Zn(2+). Glu-417 is a catalytic residue. Zn(2+) contacts are provided by His-420 and Asp-492.

It in the central section; belongs to the AAA ATPase family. In the C-terminal section; belongs to the peptidase M41 family. In terms of assembly, homohexamer. The cofactor is Zn(2+).

It is found in the cell membrane. In terms of biological role, acts as a processive, ATP-dependent zinc metallopeptidase for both cytoplasmic and membrane proteins. Plays a role in the quality control of integral membrane proteins. This Symbiobacterium thermophilum (strain DSM 24528 / JCM 14929 / IAM 14863 / T) protein is ATP-dependent zinc metalloprotease FtsH 2.